The following is a 782-amino-acid chain: Nezukol synthase KSL3 (782 aa).

Mg(2+) contacts are provided by Asp-529, Asp-533, Asn-677, and Glu-685. A DDXXD motif motif is present at residues Asp-529–Asp-533.

The protein belongs to the terpene synthase family. It depends on Mg(2+) as a cofactor. As to expression, highly expressed in leaves, and, at low levels, in stems, but barely in roots and flowers.

It carries out the reaction (+)-copalyl diphosphate = miltiradiene + diphosphate. The enzyme catalyses (+)-copalyl diphosphate + H2O = nezukol + diphosphate. Its pathway is secondary metabolite biosynthesis; terpenoid biosynthesis. Functionally, involved in the biosynthesis of ent-kaurene diterpenoids natural products such as oridonin, miltiradiene, eriocalyxin B and nezukol, known to exhibit antitumor, anti-inflammatory and antibacterial activities. Catalyzes the conversion of (+)-copalyl diphosphate ((+)-CPP) to nezukol and miltiradiene. The reaction mechanism proceeds via the ionization of the diphosphate group of (+)-CPP, followed by formation of an intermediary pimar-15-en-8-yl(+) carbocation and neutralization of the carbocation by water capture at C-8 to yield nezukol. Can interact with ent-copalyl diphosphate (ent-CPP) but seems unable to use it as substrate. The sequence is that of Nezukol synthase KSL3 from Isodon rubescens (Rabdosia rubescens).